The sequence spans 469 residues: 3-isopropylmalate dehydratase large subunit (469 aa).

Residues Cys347, Cys408, and Cys411 each coordinate [4Fe-4S] cluster.

It belongs to the aconitase/IPM isomerase family. LeuC type 1 subfamily. In terms of assembly, heterodimer of LeuC and LeuD. [4Fe-4S] cluster is required as a cofactor.

It catalyses the reaction (2R,3S)-3-isopropylmalate = (2S)-2-isopropylmalate. It participates in amino-acid biosynthesis; L-leucine biosynthesis; L-leucine from 3-methyl-2-oxobutanoate: step 2/4. In terms of biological role, catalyzes the isomerization between 2-isopropylmalate and 3-isopropylmalate, via the formation of 2-isopropylmaleate. This chain is 3-isopropylmalate dehydratase large subunit, found in Haemophilus influenzae (strain 86-028NP).